Consider the following 434-residue polypeptide: Maltoporin (434 aa).

The signal sequence occupies residues 1–25 (MMTTLRKLPLALAIAAGVLTTQAMA).

This sequence belongs to the porin LamB (TC 1.B.3) family. In terms of assembly, homotrimer formed of three 18-stranded antiparallel beta-barrels, containing three independent channels.

The protein resides in the cell outer membrane. The enzyme catalyses beta-maltose(in) = beta-maltose(out). In terms of biological role, involved in the transport of maltose and maltodextrins. This Serratia proteamaculans (strain 568) protein is Maltoporin.